Reading from the N-terminus, the 173-residue chain is Inorganic pyrophosphatase (173 aa).

Positions 28, 42, and 54 each coordinate substrate. Residues Asp-64, Asp-69, and Asp-101 each contribute to the Mg(2+) site. Tyr-140 lines the substrate pocket.

This sequence belongs to the PPase family. As to quaternary structure, homohexamer. Mg(2+) is required as a cofactor.

It localises to the cytoplasm. It catalyses the reaction diphosphate + H2O = 2 phosphate + H(+). In terms of biological role, catalyzes the hydrolysis of inorganic pyrophosphate (PPi) forming two phosphate ions. The polypeptide is Inorganic pyrophosphatase (Helicobacter pylori (strain J99 / ATCC 700824) (Campylobacter pylori J99)).